Consider the following 230-residue polypeptide: Orotidine 5'-phosphate decarboxylase (230 aa).

Substrate is bound by residues aspartate 10, lysine 31, aspartate 58–threonine 67, threonine 117, arginine 179, glutamine 188, glycine 208, and arginine 209. Residue lysine 60 is the Proton donor of the active site.

The protein belongs to the OMP decarboxylase family. Type 1 subfamily. As to quaternary structure, homodimer.

The enzyme catalyses orotidine 5'-phosphate + H(+) = UMP + CO2. The protein operates within pyrimidine metabolism; UMP biosynthesis via de novo pathway; UMP from orotate: step 2/2. Catalyzes the decarboxylation of orotidine 5'-monophosphate (OMP) to uridine 5'-monophosphate (UMP). This Staphylococcus epidermidis (strain ATCC 12228 / FDA PCI 1200) protein is Orotidine 5'-phosphate decarboxylase.